Consider the following 142-residue polypeptide: Hemoglobin subunit alpha (142 aa).

Residue S1 is modified to N-acetylserine. The Globin domain maps to 1-142 (SLSDKDKADV…LALALGQKYR (142 aa)). H58 contributes to the O2 binding site. H88 contacts heme b.

Belongs to the globin family. Heterotetramer of two alpha chains and two beta chains. In terms of tissue distribution, red blood cells.

Involved in oxygen transport from gills to the various peripheral tissues. This Catostomus clarkii (Desert sucker) protein is Hemoglobin subunit alpha (hba).